A 199-amino-acid chain; its full sequence is Dephospho-CoA kinase (199 aa).

The 197-residue stretch at 3–199 folds into the DPCK domain; sequence RIGLTGGIGS…HCKYLQIAQT (197 aa). 11 to 16 lines the ATP pocket; it reads GSGKST.

The protein belongs to the CoaE family.

The protein resides in the cytoplasm. It carries out the reaction 3'-dephospho-CoA + ATP = ADP + CoA + H(+). Its pathway is cofactor biosynthesis; coenzyme A biosynthesis; CoA from (R)-pantothenate: step 5/5. Catalyzes the phosphorylation of the 3'-hydroxyl group of dephosphocoenzyme A to form coenzyme A. The sequence is that of Dephospho-CoA kinase from Coxiella burnetii (strain RSA 493 / Nine Mile phase I).